Consider the following 387-residue polypeptide: Protein FAM153B (387 aa).

Disordered regions lie at residues 233 to 256 (SYNGEEEDPEEVKTSLGVPQRGDL) and 327 to 374 (TITG…KKSR). Positions 336-345 (SASPSSAPAE) are enriched in low complexity. Basic and acidic residues predominate over residues 347 to 359 (ATEKTKVEEEVKT). Residues 360 to 374 (RKPKKKTRKPSKKSR) show a composition bias toward basic residues.

This sequence belongs to the FAM153 family.

This is Protein FAM153B (FAM153B) from Homo sapiens (Human).